A 226-amino-acid chain; its full sequence is MNENLFASFATPTMMGLPIVILIIMFPSILFPSSNRLINNRLISIQQWLVQLTSKQMMTIHNNKGQTWTLMLMSLILFIGSTNLLGLLPHSFTPTTQLSMNLGMAIPLWAGTVFMGFRHKTKAALAHFLPQGTPIFLIPMLVIIETISLFIQPMALAVRLTANITAGHLLIHLIGGATLALMDISPSTALITFIILILLTILEFAVAMIQAYVFTLLVSLYLHDNT.

Transmembrane regions (helical) follow at residues 12–32 (PTMM…ILFP), 68–88 (WTLM…LGLL), 97–117 (QLSM…FMGF), 135–155 (IFLI…QPMA), 164–184 (ITAG…LMDI), and 189–209 (ALIT…VAMI).

The protein belongs to the ATPase A chain family. As to quaternary structure, component of the ATP synthase complex composed at least of ATP5F1A/subunit alpha, ATP5F1B/subunit beta, ATP5MC1/subunit c (homooctomer), MT-ATP6/subunit a, MT-ATP8/subunit 8, ATP5ME/subunit e, ATP5MF/subunit f, ATP5MG/subunit g, ATP5MK/subunit k, ATP5MJ/subunit j, ATP5F1C/subunit gamma, ATP5F1D/subunit delta, ATP5F1E/subunit epsilon, ATP5PF/subunit F6, ATP5PB/subunit b, ATP5PD/subunit d, ATP5PO/subunit OSCP. ATP synthase complex consists of a soluble F(1) head domain (subunits alpha(3) and beta(3)) - the catalytic core - and a membrane F(0) domain - the membrane proton channel (subunits c, a, 8, e, f, g, k and j). These two domains are linked by a central stalk (subunits gamma, delta, and epsilon) rotating inside the F1 region and a stationary peripheral stalk (subunits F6, b, d, and OSCP). Interacts with DNAJC30; interaction is direct.

It localises to the mitochondrion inner membrane. It carries out the reaction H(+)(in) = H(+)(out). Subunit a, of the mitochondrial membrane ATP synthase complex (F(1)F(0) ATP synthase or Complex V) that produces ATP from ADP in the presence of a proton gradient across the membrane which is generated by electron transport complexes of the respiratory chain. ATP synthase complex consist of a soluble F(1) head domain - the catalytic core - and a membrane F(1) domain - the membrane proton channel. These two domains are linked by a central stalk rotating inside the F(1) region and a stationary peripheral stalk. During catalysis, ATP synthesis in the catalytic domain of F(1) is coupled via a rotary mechanism of the central stalk subunits to proton translocation. With the subunit c (ATP5MC1), forms the proton-conducting channel in the F(0) domain, that contains two crucial half-channels (inlet and outlet) that facilitate proton movement from the mitochondrial intermembrane space (IMS) into the matrix. Protons are taken up via the inlet half-channel and released through the outlet half-channel, following a Grotthuss mechanism. This is ATP synthase F(0) complex subunit a from Equus asinus (Donkey).